A 110-amino-acid chain; its full sequence is Thioredoxin Asp f 29 (110 aa).

The Thioredoxin domain occupies 1 to 110; that stretch reads MSHNVEKITD…LEAAIKAHVA (110 aa). Catalysis depends on nucleophile residues Cys34 and Cys37. Cys34 and Cys37 are disulfide-bonded.

This sequence belongs to the thioredoxin family.

In terms of biological role, participates in various redox reactions through the reversible oxidation of its active center dithiol to a disulfide and catalyzes dithiol-disulfide exchange reactions. In Aspergillus fumigatus (Neosartorya fumigata), this protein is Thioredoxin Asp f 29.